An 86-amino-acid polypeptide reads, in one-letter code: Mu-theraphotoxin-Hhn1b 3 (86 aa).

The first 21 residues, 1 to 21 (MKASMFLALTGLALLFVVCYA), serve as a signal peptide directing secretion. Residues 22 to 49 (SESEEKEFSNELLSSVLAVDDNSKGEER) constitute a propeptide that is removed on maturation. Intrachain disulfides connect C51/C66, C58/C73, and C65/C80. At I84 the chain carries Isoleucine amide.

The protein belongs to the neurotoxin 10 (Hwtx-1) family. 22 (Htx-4) subfamily. Monomer. Expressed by the venom gland.

The protein resides in the secreted. Functionally, neurotoxin. Selectively blocks neuronal tetrodotoxin-sensitive voltage-gated sodium channels (Nav) with an IC(50) of 44.6 nM. Does not affect tetrodotoxin-resistant voltage-gated sodium channels or calcium channels. This Cyriopagopus hainanus (Chinese bird spider) protein is Mu-theraphotoxin-Hhn1b 3.